The chain runs to 41 residues: Photosystem II reaction center protein L (41 aa).

A helical transmembrane segment spans residues 20 to 40 (SLYLGLLLVFVVGLLFSSYFL).

It belongs to the PsbL family. PSII is composed of 1 copy each of membrane proteins PsbA, PsbB, PsbC, PsbD, PsbE, PsbF, PsbH, PsbI, PsbJ, PsbK, PsbL, PsbM, PsbT, PsbX, PsbY, PsbZ, Psb30/Ycf12, peripheral proteins PsbO, CyanoQ (PsbQ), PsbU, PsbV and a large number of cofactors. It forms dimeric complexes.

It localises to the cellular thylakoid membrane. Its function is as follows. One of the components of the core complex of photosystem II (PSII). PSII is a light-driven water:plastoquinone oxidoreductase that uses light energy to abstract electrons from H(2)O, generating O(2) and a proton gradient subsequently used for ATP formation. It consists of a core antenna complex that captures photons, and an electron transfer chain that converts photonic excitation into a charge separation. This subunit is found at the monomer-monomer interface and is required for correct PSII assembly and/or dimerization. This is Photosystem II reaction center protein L from Synechococcus sp. (strain JA-3-3Ab) (Cyanobacteria bacterium Yellowstone A-Prime).